The sequence spans 314 residues: Secreted frizzled-related protein 5 (314 aa).

An N-terminal signal peptide occupies residues 1-21; sequence MWVAWSARTAALALLLGALHG. Residues 45–162 enclose the FZ domain; the sequence is SKPPQCLDIP…PLDNDLCIAV (118 aa). 8 disulfide bridges follow: Cys-50/Cys-113, Cys-60/Cys-106, Cys-97/Cys-132, Cys-121/Cys-159, Cys-125/Cys-149, Cys-178/Cys-250, Cys-181/Cys-252, and Cys-195/Cys-300. The 123-residue stretch at 178–300 folds into the NTR domain; it reads CAQCEMEHSA…AVKFMFSYPC (123 aa).

It belongs to the secreted frizzled-related protein (sFRP) family.

The protein resides in the secreted. Functionally, soluble frizzled-related proteins (sFRPS) function as modulators of Wnt signaling through direct interaction with Wnts. They have a role in regulating cell growth and differentiation in specific cell types. SFRP5 may be involved in determining the polarity of photoreceptor, and perhaps, other cells in the retina. This chain is Secreted frizzled-related protein 5 (Sfrp5), found in Mus musculus (Mouse).